The sequence spans 438 residues: GTPase Der (438 aa).

EngA-type G domains follow at residues 4–168 and 176–351; these read PVVA…PAGA and VRIA…GEYR. Residues 10–17, 57–61, 120–123, 182–189, 229–233, and 294–297 each bind GTP; these read GRPNVGKS, DTGGI, NKVD, DTAGM, and NKWD. The KH-like domain occupies 352 to 436; it reads RQIPTSMLNR…PVRILFRRRE (85 aa).

Belongs to the TRAFAC class TrmE-Era-EngA-EngB-Septin-like GTPase superfamily. EngA (Der) GTPase family. In terms of assembly, associates with the 50S ribosomal subunit.

Functionally, GTPase that plays an essential role in the late steps of ribosome biogenesis. The sequence is that of GTPase Der from Desulforudis audaxviator (strain MP104C).